We begin with the raw amino-acid sequence, 618 residues long: UvrABC system protein C (618 aa).

Residues Thr-20–Val-98 enclose the GIY-YIG domain. The region spanning Asp-207–Met-242 is the UVR domain.

Belongs to the UvrC family. In terms of assembly, interacts with UvrB in an incision complex.

Its subcellular location is the cytoplasm. The UvrABC repair system catalyzes the recognition and processing of DNA lesions. UvrC both incises the 5' and 3' sides of the lesion. The N-terminal half is responsible for the 3' incision and the C-terminal half is responsible for the 5' incision. The polypeptide is UvrABC system protein C (Xanthomonas oryzae pv. oryzae (strain MAFF 311018)).